The sequence spans 360 residues: GDP-mannose transporter (360 aa).

Residues 1-49 (MSSSETKGRNEEDVAEIKKAIATGAVKDPSNLSAIPPIFVVSGANFSMN) are Cytoplasmic-facing. A helical membrane pass occupies residues 50 to 67 (FLLLCIQSSVCCACVFAV). Residues 68-84 (KKLGIISFRDFDMKDAK) lie on the Lumenal side of the membrane. Residues 85–105 (MWFPISFLLVSVIYTGSKSLQ) form a helical membrane-spanning segment. Topologically, residues 106 to 110 (YLSIP) are cytoplasmic. The chain crosses the membrane as a helical span at residues 111–131 (VYTIFKNLTIILIAYGEVLWF). Over 132 to 134 (GGR) the chain is Lumenal. A helical membrane pass occupies residues 135–155 (VTALTFVSFIFMVISSIIAAW). Over 156–164 (SDVQSALAS) the chain is Cytoplasmic. The helical transmembrane segment at 165–185 (SIPGASSGVSVGAMQSLFGAL) threads the bilayer. Position 186 (R186) is a topological domain, lumenal. Residues 187–207 (GLNVGYFWMLVNCLTSAAYVL) form a helical membrane-spanning segment. Over 208–220 (SMRKRIKSTGFSD) the chain is Cytoplasmic. A helical membrane pass occupies residues 221 to 241 (WDTMFYNNLLSIPVLAVFSLI). The Lumenal segment spans residues 242–260 (AEDWGRENLNRNFPAETRN). The chain crosses the membrane as a helical span at residues 261–281 (FLLFAIAFSGAAAVGISYTTA). The Cytoplasmic portion of the chain corresponds to 282–291 (WCVRVTSSTT). A helical membrane pass occupies residues 292-312 (YSMVGALNKLPVAASGMLFFG). Residues 313–314 (DP) are Lumenal-facing. Residues 315 to 335 (VTVGSVSAVGVGFFAGIVYAV) traverse the membrane as a helical segment. Residues 336-360 (AKNNQKKNERRQAADAIIPMASRKP) lie on the Cytoplasmic side of the membrane.

The protein belongs to the TPT transporter family. SLC35D subfamily. In terms of assembly, homooligomer.

The protein resides in the golgi apparatus membrane. Its subcellular location is the cytoplasmic vesicle membrane. It is found in the endoplasmic reticulum membrane. In terms of biological role, involved in the import of GDP-mannose from the cytoplasm into the Golgi lumen. The chain is GDP-mannose transporter (VRG4) from Coprinopsis cinerea (strain Okayama-7 / 130 / ATCC MYA-4618 / FGSC 9003) (Inky cap fungus).